A 90-amino-acid chain; its full sequence is DNA-directed RNA polymerase subunit omega (90 aa).

The interval 69 to 90 (RQEQQEQEAAELAAVSSIARNR) is disordered.

It belongs to the RNA polymerase subunit omega family. The RNAP catalytic core consists of 2 alpha, 1 beta, 1 beta' and 1 omega subunit. When a sigma factor is associated with the core the holoenzyme is formed, which can initiate transcription.

It carries out the reaction RNA(n) + a ribonucleoside 5'-triphosphate = RNA(n+1) + diphosphate. Functionally, promotes RNA polymerase assembly. Latches the N- and C-terminal regions of the beta' subunit thereby facilitating its interaction with the beta and alpha subunits. The protein is DNA-directed RNA polymerase subunit omega of Vibrio vulnificus (strain CMCP6).